The following is a 400-amino-acid chain: F-box/kelch-repeat protein At4g19870 (400 aa).

Positions 1–10 are enriched in basic and acidic residues; the sequence is MKRQAKPPEK. A disordered region spans residues 1 to 33; it reads MKRQAKPPEKKTKRTTNASSPTPSSSSPSLSSL. Low complexity predominate over residues 19–33; it reads SSPTPSSSSPSLSSL. The 47-residue stretch at 27-73 folds into the F-box domain; that stretch reads SPSLSSLPDEIVENCLARISRSYYPTLSIVSKSFRSIISSTELYVAR. 3 Kelch repeats span residues 146–192, 194–240, and 242–284; these read EIYV…LYDG, IYVI…RIAE, and EGKI…SVLY.

This is F-box/kelch-repeat protein At4g19870 from Arabidopsis thaliana (Mouse-ear cress).